The primary structure comprises 252 residues: 3-deoxy-manno-octulosonate cytidylyltransferase (252 aa).

It belongs to the KdsB family.

Its subcellular location is the cytoplasm. The catalysed reaction is 3-deoxy-alpha-D-manno-oct-2-ulosonate + CTP = CMP-3-deoxy-beta-D-manno-octulosonate + diphosphate. The protein operates within nucleotide-sugar biosynthesis; CMP-3-deoxy-D-manno-octulosonate biosynthesis; CMP-3-deoxy-D-manno-octulosonate from 3-deoxy-D-manno-octulosonate and CTP: step 1/1. Its pathway is bacterial outer membrane biogenesis; lipopolysaccharide biosynthesis. Functionally, activates KDO (a required 8-carbon sugar) for incorporation into bacterial lipopolysaccharide in Gram-negative bacteria. The polypeptide is 3-deoxy-manno-octulosonate cytidylyltransferase (Vibrio cholerae serotype O1 (strain ATCC 39315 / El Tor Inaba N16961)).